The sequence spans 106 residues: VDAPADMVLKAPAGAKMTKAPVDFSHKGHAALDCTKCHHKWDGKAEVKKCSAEGCHVBTSKKGKKSTPKFYSAFHSKSDISCVGCHKALKKATGPTKCGDCHPKKK.

His-26, His-29, Cys-34, Cys-37, His-38, His-39, Cys-50, Cys-55, His-56, His-75, Cys-82, Cys-85, His-86, Cys-98, Cys-101, and His-102 together coordinate heme c.

Post-translationally, binds 4 heme c groups per subunit.

Its function is as follows. Participates in sulfate respiration coupled with phosphorylation by transferring electrons from the enzyme dehydrogenase to ferredoxin. The protein is Cytochrome c3 of Maridesulfovibrio salexigens (Desulfovibrio salexigens).